The primary structure comprises 342 residues: Aquaporin-7 (342 aa).

The Cytoplasmic portion of the chain corresponds to 1–36 (MVQTSRHRRSTRGSKMVSWSVMAKIQEILQKKMVRE). At Ser-20 the chain carries Phosphoserine. The chain crosses the membrane as a helical span at residues 37–54 (FLAEFMSTYVMMVFGLGS). At 55–67 (VAHMVLNKKYGSY) the chain is on the extracellular side. The chain crosses the membrane as a helical span at residues 68–85 (LGVNLGFGFGVTMGVHVA). Topologically, residues 86-89 (GHIS) are cytoplasmic. An intramembrane region (discontinuously helical) is located at residues 90-103 (GAHMNAAVTFANCA). Residues 94–96 (NAA) carry the NPA 1 motif. At 104-111 (LGRVPWRK) the chain is on the cytoplasmic side. The helical transmembrane segment at 112 to 132 (FPVYVLGQFLGSFLAAATIYT) threads the bilayer. Residues 133–167 (LFYTAILHFSGGQLMVTGPVATAGIFATYLPDHMT) are Extracellular-facing. Residues 168-188 (LWRGFLNEAWLTGMLQLCLFA) form a helical membrane-spanning segment. Over 189 to 200 (ITDQENNAALPG) the chain is Cytoplasmic. Residues 201–217 (TQALVIGILVVIIGVSL) traverse the membrane as a helical segment. Residues 218-221 (GMNT) are Extracellular-facing. Positions 222–235 (GYAINPSRDLPPRV) form an intramembrane region, discontinuously helical. The NPA 2 signature appears at 226-228 (NPS). Over 236-253 (FTFIAGWGKEVFSEGENW) the chain is Extracellular. Residues 254-275 (WWVPVVAPLLGACLGGIIYLVF) form a helical membrane-spanning segment. At 276-342 (IGSTTPREPL…LHESMALGHF (67 aa)) the chain is on the cytoplasmic side.

Belongs to the MIP/aquaporin (TC 1.A.8) family. Homotetramer; each monomer provides an independent glycerol/water pore. Two homotetramers on opposing membranes can dimerize, forming a cell-cell junction. Interacts with PLIN1. Phosphorylation by PKA could prevent the interaction with PLIN1.

Its subcellular location is the cell membrane. The protein localises to the cytoplasmic vesicle membrane. It localises to the lipid droplet. The enzyme catalyses glycerol(in) = glycerol(out). It carries out the reaction H2O(in) = H2O(out). It catalyses the reaction urea(in) = urea(out). Its activity is regulated as follows. Glycerol transport is regulated by pH, with the porin being permeable to glycerol at pH 7.4 but not at pH 5.5. Water permeability, however, is not influenced by pH. Functionally, aquaglyceroporins form homotetrameric transmembrane channels, with each monomer independently mediating glycerol and water transport across the plasma membrane along their osmotic gradient. Could also be permeable to urea. Mediates the efflux of glycerol, formed upon triglyceride hydrolysis, to avoid its accumulation in adipocytes and to make it available to other tissues. In the kidney, mediates the reabsorption of glycerol, preventing its loss in urine, again participating to energy homeostasis. In pancreatic beta cells, it also mediates the efflux of glycerol, regulating its intracellular levels. This chain is Aquaporin-7 (AQP7), found in Macaca fascicularis (Crab-eating macaque).